A 405-amino-acid polypeptide reads, in one-letter code: Chalcone synthase (405 aa).

C170 is an active-site residue.

It belongs to the thiolase-like superfamily. Chalcone/stilbene synthases family.

It carries out the reaction (E)-4-coumaroyl-CoA + 3 malonyl-CoA + 3 H(+) = 2',4,4',6'-tetrahydroxychalcone + 3 CO2 + 4 CoA. Its pathway is secondary metabolite biosynthesis; flavonoid biosynthesis. Functionally, the primary product of this enzyme is 4,2',4',6'-tetrahydroxychalcone (also termed naringenin-chalcone or chalcone) which can under specific conditions spontaneously isomerize into naringenin. This Equisetum arvense (Field horsetail) protein is Chalcone synthase (CHS).